A 243-amino-acid polypeptide reads, in one-letter code: Large ribosomal subunit protein uL2 (243 aa).

Disordered stretches follow at residues 1–23 (MGKR…PSHR) and 204–243 (PFGG…GGRR). Residues 228-243 (KVGHIAARKTGRGGRR) are compositionally biased toward basic residues.

This sequence belongs to the universal ribosomal protein uL2 family. In terms of assembly, part of the 50S ribosomal subunit. Forms a bridge to the 30S subunit in the 70S ribosome.

Its function is as follows. One of the primary rRNA binding proteins. Required for association of the 30S and 50S subunits to form the 70S ribosome, for tRNA binding and peptide bond formation. It has been suggested to have peptidyltransferase activity; this is somewhat controversial. Makes several contacts with the 16S rRNA in the 70S ribosome. The polypeptide is Large ribosomal subunit protein uL2 (Methanopyrus kandleri (strain AV19 / DSM 6324 / JCM 9639 / NBRC 100938)).